The chain runs to 116 residues: Small ribosomal subunit protein uS13m (116 aa).

The segment at 92 to 116 (HQDGSPLRGQRTHTNARTARKQIRK) is disordered.

The protein belongs to the universal ribosomal protein uS13 family. Part of the small ribosomal subunit.

It is found in the mitochondrion. In terms of biological role, located at the top of the head of the small subunit, it contacts several helices of the 18S rRNA. The polypeptide is Small ribosomal subunit protein uS13m (RPS13) (Triticum aestivum (Wheat)).